The primary structure comprises 335 residues: Cobalt-precorrin-5B C(1)-methyltransferase (335 aa).

The protein belongs to the CbiD family.

The catalysed reaction is Co-precorrin-5B + S-adenosyl-L-methionine = Co-precorrin-6A + S-adenosyl-L-homocysteine. Its pathway is cofactor biosynthesis; adenosylcobalamin biosynthesis; cob(II)yrinate a,c-diamide from sirohydrochlorin (anaerobic route): step 6/10. Its function is as follows. Catalyzes the methylation of C-1 in cobalt-precorrin-5B to form cobalt-precorrin-6A. The polypeptide is Cobalt-precorrin-5B C(1)-methyltransferase (Methanospirillum hungatei JF-1 (strain ATCC 27890 / DSM 864 / NBRC 100397 / JF-1)).